A 190-amino-acid polypeptide reads, in one-letter code: CASP-like protein 1E1 (190 aa).

The segment at 1–21 (MEHESKTKMDGIEMEKGKKEN) is disordered. Topologically, residues 1-28 (MEHESKTKMDGIEMEKGKKENGSRKGVE) are cytoplasmic. Residues 29–49 (ITMRVLALVLTMVAATVLGVA) traverse the membrane as a helical segment. Residues 50–83 (KQTEVVPIKLIPTLPPLNVATTAKASYLSAFVYN) lie on the Extracellular side of the membrane. Residues 84-104 (ICANAIACGYTAISIMIVIIS) form a helical membrane-spanning segment. Residues 105-111 (KGRRSKC) are Cytoplasmic-facing. A helical transmembrane segment spans residues 112 to 132 (LLMAVLIGDLMMVALLCSSTG). Over 133-163 (AAGAIGLMGRHGNKHVMWKKVCGVFGKFCNQ) the chain is Extracellular. Residues 164 to 184 (AAVSVAITLIASVVFMLLVVL) traverse the membrane as a helical segment. Topologically, residues 185 to 190 (DALKLP) are cytoplasmic.

This sequence belongs to the Casparian strip membrane proteins (CASP) family. In terms of assembly, homodimer and heterodimers.

It localises to the cell membrane. This is CASP-like protein 1E1 from Arabidopsis lyrata subsp. lyrata (Lyre-leaved rock-cress).